Reading from the N-terminus, the 377-residue chain is MAAAVRFRVVRALPMSRPAITAAATSVFCGSSHRQLHHAVIPHGKGGRSSVSGVVATVFGATGFLGRYVVNHLGRMGSQVIIPYRCDVYDIMHLRLMGDLGQLTFLEWDARDKDSIRKAVQHSNVVINLIGREWETRNFDFEDVFVNIPRAIAQASKEAGVERFIHVSHLNASMKSSSKSLRSKAVGEKEVRSVFPEAIIIRPSDIFGREDRFLNHFANYRWFLAVPLVSLGFKTVKQPVYVADVSKGIVNATKDPDAVGKTFAFTGPNRYLLFHLVKYIFGMTHRTFIPYPLPLFVYSWIGKLFGLSPFEPWTTKDKVERIHISDVMPTDLPGLEDLGVQPTPLELKSIEVLRRHRTYRWLSSEIEETKPAKTVNY.

The transit peptide at 1-35 (MAAAVRFRVVRALPMSRPAITAAATSVFCGSSHRQ) directs the protein to the mitochondrion. At lysine 175 the chain carries N6-succinyllysine. N6-acetyllysine occurs at positions 189 and 370.

It belongs to the complex I NDUFA9 subunit family. In terms of assembly, complex I is composed of 45 different subunits. This a component of the hydrophobic protein fraction. Interacts with BLOC1S1. Interacts with SLC2A4. Interacts with CLOCK. Interacts with RAB5IF. It depends on FAD as a cofactor. In terms of processing, acetylated on lysine residues. BLOC1S1 is required for acetylation. Acetylated by CLOCK in a circadian manner.

Its subcellular location is the mitochondrion matrix. In terms of biological role, accessory subunit of the mitochondrial membrane respiratory chain NADH dehydrogenase (Complex I), that is believed not to be involved in catalysis. Complex I functions in the transfer of electrons from NADH to the respiratory chain. The immediate electron acceptor for the enzyme is believed to be ubiquinone. This Mus musculus (Mouse) protein is NADH dehydrogenase [ubiquinone] 1 alpha subcomplex subunit 9, mitochondrial (Ndufa9).